Reading from the N-terminus, the 154-residue chain is Large ribosomal subunit protein uL22 (154 aa).

This sequence belongs to the universal ribosomal protein uL22 family. Part of the 50S ribosomal subunit.

Its function is as follows. This protein binds specifically to 23S rRNA. It makes multiple contacts with different domains of the 23S rRNA in the assembled 50S subunit and ribosome. In terms of biological role, the globular domain of the protein is located near the polypeptide exit tunnel on the outside of the subunit, while an extended beta-hairpin is found that lines the wall of the exit tunnel in the center of the 70S ribosome. This Methanoregula boonei (strain DSM 21154 / JCM 14090 / 6A8) protein is Large ribosomal subunit protein uL22.